A 125-amino-acid chain; its full sequence is Cystatin-like cysteine protease inhibitor EPIC2B (125 aa).

The signal sequence occupies residues 1–21 (MSFLRPTLALLAVTALVTTSA). Asn-45 is a glycosylation site (N-linked (GlcNAc...) asparagine). The Secondary area of contact signature appears at 68-72 (QVVSG).

It belongs to the cystatin family. As to quaternary structure, interacts with the host papain-like cysteine protease PIP1. Interacts with the host papain-like cysteine protease RCR3. Interacts with the host papain-like cysteine protease C14.

It localises to the secreted. Secreted effector that interacts with and inhibits the pathogenesis-related papain-like cysteine proteases C14, PIP1 and RCR3 of host plants. Inhibition of host proteases by a pathogen extracellular protease inhibitor forms a specific type of defense-counterdefense mechanism between plants and microbial pathogens. In Phytophthora infestans (strain T30-4) (Potato late blight agent), this protein is Cystatin-like cysteine protease inhibitor EPIC2B.